The sequence spans 703 residues: Protein O-mannosyl-transferase TMEM260 (703 aa).

8 consecutive transmembrane segments (helical) span residues 20 to 40 (GALR…TLTL), 68 to 88 (PLFT…SVAY), 90 to 110 (VNLL…YTVF), 137 to 157 (IAAE…ALTV), 182 to 202 (SLCN…WILF), 218 to 238 (LTLA…SSYL), 314 to 334 (KSSV…FFAW), and 352 to 372 (FWLQ…ATLV). Asn-403 and Asn-564 each carry an N-linked (GlcNAc...) asparagine glycan.

Belongs to the glycosyltransferase 117 (GT117) family.

Its subcellular location is the endoplasmic reticulum membrane. It carries out the reaction a di-trans,poly-cis-dolichyl beta-D-mannosyl phosphate + L-seryl-[protein] = 3-O-(alpha-D-mannosyl)-L-seryl-[protein] + a di-trans,poly-cis-dolichyl phosphate + H(+). It catalyses the reaction a di-trans,poly-cis-dolichyl beta-D-mannosyl phosphate + L-threonyl-[protein] = 3-O-(alpha-D-mannosyl)-L-threonyl-[protein] + a di-trans,poly-cis-dolichyl phosphate + H(+). Functionally, O-mannosyl-transferase that transfers mannosyl residues to the hydroxyl group of serine or threonine residues of proteins. Specifically glycosylates the IPT/TIG domain of target proteins, such as MET and MST1R/RON. TMEM260-mediated O-mannosylated residues are composed of single mannose glycans that are not elongated or modified. In Mus musculus (Mouse), this protein is Protein O-mannosyl-transferase TMEM260.